The chain runs to 167 residues: MLTYKSILIAVDGSHEAEWAFNKAVDVAKRNDAKLTVVNVIDSRTYSSYEVYDAQFTEKSKNFSDDLLKGYKEVATNAGVKNVETRLEFGSPKAIIPKKLATDVDADLIMCGTSGLNAVERFIVGSVSEAIVRHSPCDVLVVRTEELPEDFQPQVATDEFKSQYQAH.

This sequence belongs to the universal stress protein A family.

It is found in the cytoplasm. In Staphylococcus saprophyticus subsp. saprophyticus (strain ATCC 15305 / DSM 20229 / NCIMB 8711 / NCTC 7292 / S-41), this protein is Putative universal stress protein SSP1056.